An 891-amino-acid polypeptide reads, in one-letter code: von Willebrand factor A domain-containing protein 7 (891 aa).

The first 28 residues, M1–A28, serve as a signal peptide directing secretion. N55 carries N-linked (GlcNAc...) asparagine glycosylation. The tract at residues P238 to P273 is disordered. In terms of domain architecture, VWFA spans A314–M499.

As to expression, expressed at low level in many tissues.

Its subcellular location is the secreted. The chain is von Willebrand factor A domain-containing protein 7 (Vwa7) from Mus musculus (Mouse).